Here is an 86-residue protein sequence, read N- to C-terminus: Large ribosomal subunit protein bL31B (86 aa).

This sequence belongs to the bacterial ribosomal protein bL31 family. Type B subfamily. As to quaternary structure, part of the 50S ribosomal subunit.

The polypeptide is Large ribosomal subunit protein bL31B (Yersinia enterocolitica serotype O:8 / biotype 1B (strain NCTC 13174 / 8081)).